An 85-amino-acid polypeptide reads, in one-letter code: Elongation factor 1-beta (85 aa).

This sequence belongs to the EF-1-beta/EF-1-delta family.

Its function is as follows. Promotes the exchange of GDP for GTP in EF-1-alpha/GDP, thus allowing the regeneration of EF-1-alpha/GTP that could then be used to form the ternary complex EF-1-alpha/GTP/AAtRNA. The chain is Elongation factor 1-beta from Methanoregula boonei (strain DSM 21154 / JCM 14090 / 6A8).